A 194-amino-acid chain; its full sequence is Kallikrein-like enzyme LV-Ka (194 aa).

Disulfide bonds link cysteine 7-cysteine 99, cysteine 44-cysteine 192, cysteine 78-cysteine 146, cysteine 110-cysteine 125, and cysteine 136-cysteine 161. The Peptidase S1 domain maps to 36–185 (LNQEDKFICP…YTEWIQSIIA (150 aa)). Serine 140 functions as the Charge relay system in the catalytic mechanism.

This sequence belongs to the peptidase S1 family. Snake venom subfamily. Monomer. In terms of processing, N-glycosylated. Expressed by the venom gland.

The protein localises to the secreted. Completely inhibited by the serine protease inhibitors NPGB and PMSF, partially inhibited by benzamidines, and weakly or not inhibited by SBTI and EDTA. Its function is as follows. Shows kallikrein-like activity, releasing bradykinin from kininogen. Also activates plasminogen, which is also a plasma kallikrein activity. Is active upon the kallikrein substrates S-2266 and S-2302, suggesting a preference for Arg in P1 position. In vivo, lowers blood pressure after intravenous injection in rat. In Lachesis muta muta (Bushmaster), this protein is Kallikrein-like enzyme LV-Ka.